The following is a 371-amino-acid chain: Proton-coupled zinc antiporter SLC30A2 (371 aa).

Residues 1–69 (MQTMDKQNLL…DPEKQRARRK (69 aa)) lie on the Cytoplasmic side of the membrane. The short motif at 47 to 50 (HYCH) is the Mitochondrial localization signal element. A Zn(2+)-binding site is contributed by C49. A helical membrane pass occupies residues 70 to 90 (LYVASAICLVFMIGEIIGGYL). At 91 to 99 (AQSLAIMTD) the chain is on the lumenal side. A helical transmembrane segment spans residues 100–120 (AAHLLTDFASMLISLFALWVS). Residues H102 and D106 each coordinate Zn(2+). Residues 121–136 (SRPATKTMNFGWHRAE) lie on the Cytoplasmic side of the membrane. A helical membrane pass occupies residues 137-157 (ILGALLSVLSIWVVTGVLVYL). At 158-172 (AVQRLISGDYEIKGD) the chain is on the lumenal side. Residues 173–193 (TMLITSGCAVAVNLIMGLALH) traverse the membrane as a helical segment. Residues 194–219 (QSGHGHSHGNSRDDSSQQQNPSVRAA) are Cytoplasmic-facing. Residues 220–240 (FIHVIGDLLQSVGVLVAAYII) form a helical membrane-spanning segment. 2 residues coordinate Zn(2+): H222 and D226. Topologically, residues 241 to 248 (YFKPEYKY) are lumenal. The chain crosses the membrane as a helical span at residues 249 to 269 (VDPICTFLFSILVLGTTLTIL). Over 270 to 303 (RDVILVLMEGTPKGVDFTTVKNLLLSVDGVEALH) the chain is Cytoplasmic. A Lysosomal targeting motif motif is present at residues 293–294 (LL). At S295 the chain carries Phosphoserine. 3 residues coordinate Zn(2+): H303, H320, and E354. A helical transmembrane segment spans residues 304–324 (SLHIWALTVAQPVLSVHIAIA). The Lumenal segment spans residues 325–371 (QNADAQAVLKVARDRLQGKFNFHTMTIQIEKYSEDMKNCQACQGPLE).

The protein belongs to the cation diffusion facilitator (CDF) transporter (TC 2.A.4) family. SLC30A subfamily. In terms of assembly, homodimer. Interacts (via lysosomal targeting motif) with AP3D1; in AP-3-mediated transport to lysosomes. Interacts with TMEM163. In terms of processing, phosphorylated at Ser-295. Phosphorylation at Ser-295 prevents localization to lysosomes. Dephosphorylation of Ser-295 which triggers localization to lysosomes, accumulation of zinc into lysosomes and lysosomal-mediated cell death is induced by TNF-alpha.

The protein resides in the cytoplasmic vesicle. The protein localises to the secretory vesicle membrane. It is found in the zymogen granule membrane. It localises to the endosome membrane. Its subcellular location is the lysosome membrane. The protein resides in the mitochondrion inner membrane. The protein localises to the cell membrane. The catalysed reaction is Zn(2+)(in) + 2 H(+)(out) = Zn(2+)(out) + 2 H(+)(in). In terms of biological role, electroneutral proton-coupled antiporter concentrating zinc ions into a variety of intracellular organelles including endosomes, zymogen granules and mitochondria. Thereby, plays a crucial role in cellular zinc homeostasis to confer upon cells protection against its potential cytotoxicity. Regulates the zinc concentration of milk, through the transport of zinc ions into secretory vesicles of mammary cells. By concentrating zinc ions into lysosomes participates to lysosomal-mediated cell death during early mammary gland involution. Its function is as follows. Electroneutral proton-coupled antiporter mediating the efflux of zinc ions through the plasma membrane. In Mus musculus (Mouse), this protein is Proton-coupled zinc antiporter SLC30A2.